The chain runs to 315 residues: Methionyl-tRNA formyltransferase (315 aa).

113–116 (SLLP) is a (6S)-5,6,7,8-tetrahydrofolate binding site.

It belongs to the Fmt family.

It catalyses the reaction L-methionyl-tRNA(fMet) + (6R)-10-formyltetrahydrofolate = N-formyl-L-methionyl-tRNA(fMet) + (6S)-5,6,7,8-tetrahydrofolate + H(+). In terms of biological role, attaches a formyl group to the free amino group of methionyl-tRNA(fMet). The formyl group appears to play a dual role in the initiator identity of N-formylmethionyl-tRNA by promoting its recognition by IF2 and preventing the misappropriation of this tRNA by the elongation apparatus. This chain is Methionyl-tRNA formyltransferase, found in Shigella flexneri serotype 5b (strain 8401).